The sequence spans 209 residues: N-acetyltransferase aca1 (209 aa).

Residues 26–202 (TNVKNKEELL…DAYIYQYHFP (177 aa)) form the N-acetyltransferase domain. Asparagine 118 lines the substrate pocket. Residue 128–133 (RSKGIG) coordinates CoA. 155 to 156 (NL) provides a ligand contact to substrate.

The protein belongs to the acetyltransferase family. In terms of assembly, homodimer.

The protein resides in the cytoplasm. The protein localises to the mitochondrion. The catalysed reaction is L-glutamate 5-semialdehyde + acetyl-CoA = N-acetyl-L-glutamate 5-semialdehyde + CoA + H(+). N-acetyltransferase involved in oxidative stress resistance. Acetylates the toxic proline metabolism intermediate (S)-1-pyrroline-5-carboxylate (P5C), or more likely its spontaneously forming tautomer glutamate-5-semialdehyde (GSA) into N-acetyl-GSA for arginine synthesis in the mitochondria. P5C has been shown to increase the levels of reactive oxygen species (ROS) in the cell by inhibiting the function of the respiratory chain in the mitochondria. The enzyme is able to reduce intracellular ROS levels under P5C-induced oxidative stress and protects cells from damage by oxidative stress. Also acetylates and thereby detoxifies the proline analog azetidine-2-carboxylate (AZC), however it is unlikely that AZC is a natural substrate as it occurs only in plants belonging to the Lilaceae family. This is N-acetyltransferase aca1 from Schizosaccharomyces pombe (strain 972 / ATCC 24843) (Fission yeast).